The primary structure comprises 430 residues: Adenylosuccinate synthetase (430 aa).

Residues 13 to 19 (GDEGKGK) and 41 to 43 (GHT) each bind GTP. Residue Asp-14 is the Proton acceptor of the active site. Asp-14 and Gly-41 together coordinate Mg(2+). Residues 14–17 (DEGK), 39–42 (NAGH), Thr-130, Arg-144, Gln-225, Thr-240, and Arg-304 each bind IMP. His-42 acts as the Proton donor in catalysis. 300 to 306 (STTGRKR) provides a ligand contact to substrate. GTP contacts are provided by residues Arg-306, 332 to 334 (KLD), and 414 to 416 (STG).

This sequence belongs to the adenylosuccinate synthetase family. In terms of assembly, homodimer. Mg(2+) is required as a cofactor.

The protein localises to the cytoplasm. The catalysed reaction is IMP + L-aspartate + GTP = N(6)-(1,2-dicarboxyethyl)-AMP + GDP + phosphate + 2 H(+). It participates in purine metabolism; AMP biosynthesis via de novo pathway; AMP from IMP: step 1/2. In terms of biological role, plays an important role in the de novo pathway of purine nucleotide biosynthesis. Catalyzes the first committed step in the biosynthesis of AMP from IMP. The chain is Adenylosuccinate synthetase from Buchnera aphidicola subsp. Schizaphis graminum (strain Sg).